Consider the following 628-residue polypeptide: Isoleucine--tRNA ligase (628 aa).

The 'KMSKS' region motif lies at K505 to R509. Position 508 (K508) interacts with ATP.

Belongs to the class-I aminoacyl-tRNA synthetase family.

The catalysed reaction is tRNA(Ile) + L-isoleucine + ATP = L-isoleucyl-tRNA(Ile) + AMP + diphosphate. This is Isoleucine--tRNA ligase from Antonospora locustae (Microsporidian parasite).